Here is a 294-residue protein sequence, read N- to C-terminus: Beta-lactamase SME-1 (294 aa).

The N-terminal stretch at 1–27 (MSNKVNFKTASFLFSVCLALSAFNAHA) is a signal peptide. A disulfide bridge links Cys-72 with Cys-242. Ser-73 acts as the Nucleophile; acyl-ester intermediate in catalysis. A beta-lactam-binding residues include Ser-73, Lys-76, Ser-133, and Asn-135. Glu-172 serves as the catalytic Proton acceptor. Residue Thr-239 coordinates a beta-lactam.

Belongs to the class-A beta-lactamase family.

The catalysed reaction is a beta-lactam + H2O = a substituted beta-amino acid. With respect to regulation, partially inhibited by the beta-lactamase-blocking agents, clavulanic acid and tazobactam. Not inhibited by EDTA. In terms of biological role, class A beta-lactamase which confers resistance to the beta-lactam antibiotics, including penicillins, some cephalosporins and carbapenems, to JM109 strain E.coli. Acts via hydrolysis of the beta-lactam ring. Has penicillin-, cephalosporin- and carbapenem-hydrolyzing activities. This is Beta-lactamase SME-1 from Serratia marcescens.